The sequence spans 436 residues: Glutamyl-tRNA reductase (436 aa).

Substrate-binding positions include 49 to 52 (TCNR), Ser-109, 114 to 116 (EGQ), and Gln-120. The active-site Nucleophile is the Cys-50. 198–203 (GAGRMS) is a binding site for NADP(+).

It belongs to the glutamyl-tRNA reductase family. In terms of assembly, homodimer.

It catalyses the reaction (S)-4-amino-5-oxopentanoate + tRNA(Glu) + NADP(+) = L-glutamyl-tRNA(Glu) + NADPH + H(+). The protein operates within porphyrin-containing compound metabolism; protoporphyrin-IX biosynthesis; 5-aminolevulinate from L-glutamyl-tRNA(Glu): step 1/2. It participates in porphyrin-containing compound metabolism; chlorophyll biosynthesis. Its function is as follows. Catalyzes the NADPH-dependent reduction of glutamyl-tRNA(Glu) to glutamate 1-semialdehyde (GSA). This chain is Glutamyl-tRNA reductase, found in Prochlorococcus marinus (strain AS9601).